The sequence spans 368 residues: Peptide chain release factor 2 (368 aa).

The residue at position 250 (Gln250) is an N5-methylglutamine.

It belongs to the prokaryotic/mitochondrial release factor family. Post-translationally, methylated by PrmC. Methylation increases the termination efficiency of RF2.

It localises to the cytoplasm. In terms of biological role, peptide chain release factor 2 directs the termination of translation in response to the peptide chain termination codons UGA and UAA. This chain is Peptide chain release factor 2, found in Mycolicibacterium vanbaalenii (strain DSM 7251 / JCM 13017 / BCRC 16820 / KCTC 9966 / NRRL B-24157 / PYR-1) (Mycobacterium vanbaalenii).